Here is a 1036-residue protein sequence, read N- to C-terminus: PDZ domain-containing RING finger protein 4 (1036 aa).

The RING-type; degenerate zinc finger occupies 18-56 (CKLCGQVLEEPLCTPCGHVFCASCLLPWAVRRRRCPLQC). Residues 129-160 (ARGGCGPTPRAGRGGGARGGPPGGRWGRGRGP) are compositionally biased toward gly residues. Residues 129–161 (ARGGCGPTPRAGRGGGARGGPPGGRWGRGRGPG) form a disordered region. 2 consecutive PDZ domains span residues 224–314 (TIVL…LRRT) and 402–486 (EVEL…VARP). The tract at residues 515 to 590 (HNEAMQPTAN…SLKSKRDLGQ (76 aa)) is disordered. Over residues 548–566 (NHEKDSGVGRTDESLRNDE) the composition is skewed to basic and acidic residues. Residues 655–689 (NQGEQEGVEHELQLLNEELRNIELECQNIMQAHRL) are a coiled coil. Residues 726 to 735 (EHPEKSDKDS) show a composition bias toward basic and acidic residues. The tract at residues 726-819 (EHPEKSDKDS…VLEGSKLPDQ (94 aa)) is disordered. Positions 736–750 (SSAYNTAESCRSTPL) are enriched in polar residues. The segment covering 774-799 (STMAATQSSSGQSSKESTSTKAKTTE) has biased composition (low complexity). Positions 805–819 (ESKEKVLEGSKLPDQ) are enriched in basic and acidic residues.

This is PDZ domain-containing RING finger protein 4 (PDZRN4) from Homo sapiens (Human).